The primary structure comprises 920 residues: MSFKNLQQLLKEAAAQERCGRVICYSSGNLQNPTSRSYHELMQEAQRASWALRTATCARHGSAVLLHFDSHWDSILWFWATLLAGCVPVMSTALPNNTSLRTAHLEHLSRTLNGPLCLTRARMAPEFSEQTCIEPIAVETFDMQTSSKEDHVDSAPDDTAVMMLTSGSTGRPKAVCLTHGQILSSIVNKLSVVPLRGPFMNWIRLDHVAALTEIHLPAILSNKDQVHVQSADLLANPVEFIRLASEHRVAKTFAPNFFLATLRDALCATQHDSPKWDLSGLYIFSGGEGNVTRTCDEISKLLGRYGAPPNVIVPGFGMTETCAGAINNTSCPWYDIERTSDFASLGTCMSCIRMRITDDSGGNTCVSPGETGNLEVTGSAVFKEYFNNPSATADAFTSDGWFKTGDRGLIDTNGYLHLAGRLKETMIINGVKYSPHEIESVLDESNIPGLTPSYNCCFCSFPPGAETEVICLVYLPTYPEEDIRARIQTTDAISKCIVMLTGSRPVIIPLDKGLLQKSALGKLSRSSIKASYEKGEYKAYQDTNSHLVKMYRQAMRTPPKDELERSLLAIFVDSLELSEEEFDVQTPVFDLGITSIDLIRLKKSIEEQRDIDQEIPMTTLMANTTVRELSAALHDLQAPGTYKPVITLQNEGSKTPLWLIHPGVGEVLVFLNLAKYIKDRPVYALRARGFGAHETPFASIEETVRTYYAAIKAKQPRGPYAVAGYSYGTMLAFEVSKQLEQGGDTVGFVGSFNLPPHIKTRMRQLDFTECLLHLAYFLALMSEQRAGELAAAFAGVQPSQERVLDEVMQNADPVRLAELQLSRQYLLQWANLAFALQSMAVDYDPSGSVARMDVFYCVPLAVAAASKQRWREEHLSQWRDFTRSEPRFHDVGGAHYTMLAPEHVFGFQKTLRGALEARGI.

Residues 13-428 (AAAQERCGRV…AGRLKETMII (416 aa)) are adenylation (A) domain. The Carrier domain maps to 558–637 (PPKDELERSL…ELSAALHDLQ (80 aa)). Ser-595 carries the post-translational modification O-(pantetheine 4'-phosphoryl)serine. The segment at 656 to 905 (PLWLIHPGVG…YTMLAPEHVF (250 aa)) is thioesterase (TE) domain.

This sequence belongs to the NRP synthetase family.

The catalysed reaction is 2 3-(4-hydroxyphenyl)pyruvate + 2 ATP = atromentin + 2 AMP + 2 diphosphate + H(+). Nonribosomal peptide synthetase that mediates the biosynthesis of atromentin. AtrA first activates 4-hydroxyphenylpyruvate (HPPA) through its A domain to AMP-HPPA. The HPPA unit is then loaded to the T domain and eventually transferred to the TE domain. Another HPPA unit is then loaded onto the T domain. The TE domain then catalyzes the condensation of the two HPPA units and the release of atromentin via cyclization. The chain is Nonribosomal peptide synthetase atrA from Aspergillus terreus (strain NIH 2624 / FGSC A1156).